Here is a 103-residue protein sequence, read N- to C-terminus: Matrix Gla protein (103 aa).

The first 19 residues, 1-19, serve as a signal peptide directing secretion; sequence MKSLLPLAILAALAVAALC. At glutamate 21 the chain carries 4-carboxyglutamate. Phosphoserine occurs at positions 22, 25, and 28. Residues 51–97 form the Gla domain; it reads HAKAQERVRELNKPAQEINREACDDYKLCERYALIYGYNAAYNRYFR. Glutamate 56, glutamate 60, glutamate 67, and glutamate 71 each carry 4-carboxyglutamate. A disulfide bridge links cysteine 73 with cysteine 79.

Belongs to the osteocalcin/matrix Gla protein family. Requires vitamin K-dependent gamma-carboxylation for its function.

The protein localises to the secreted. In terms of biological role, associates with the organic matrix of bone and cartilage. Thought to act as an inhibitor of bone formation. The polypeptide is Matrix Gla protein (Mgp) (Rattus norvegicus (Rat)).